The primary structure comprises 316 residues: Methionyl-tRNA formyltransferase (316 aa).

Position 111 to 114 (111 to 114 (GLLP)) interacts with (6S)-5,6,7,8-tetrahydrofolate.

It belongs to the Fmt family.

The catalysed reaction is L-methionyl-tRNA(fMet) + (6R)-10-formyltetrahydrofolate = N-formyl-L-methionyl-tRNA(fMet) + (6S)-5,6,7,8-tetrahydrofolate + H(+). Its function is as follows. Attaches a formyl group to the free amino group of methionyl-tRNA(fMet). The formyl group appears to play a dual role in the initiator identity of N-formylmethionyl-tRNA by promoting its recognition by IF2 and preventing the misappropriation of this tRNA by the elongation apparatus. The polypeptide is Methionyl-tRNA formyltransferase (Chlamydia trachomatis serovar L2b (strain UCH-1/proctitis)).